Reading from the N-terminus, the 456-residue chain is Choline kinase (456 aa).

It belongs to the choline/ethanolamine kinase family. As to quaternary structure, monomer. The cofactor is Mg(2+).

It localises to the cytoplasm. The protein resides in the nucleus. It catalyses the reaction choline + ATP = phosphocholine + ADP + H(+). It functions in the pathway phospholipid metabolism; phosphatidylcholine biosynthesis; phosphocholine from choline: step 1/1. Catalyzes the committed step in the synthesis of phosphatidylcholine by the CDP-choline pathway. The polypeptide is Choline kinase (Schizosaccharomyces pombe (strain 972 / ATCC 24843) (Fission yeast)).